The chain runs to 371 residues: MPAQIKKYKAAAVQAEPGWFDLELSVKKTIHWINEAGKAGCKLVAFPEVWIPGYPYWAWKVNYQQSLPMLKAYRENSLASDSDEMRRIREAARENAIYVSLGYSEIDFATLYISQVLISPTGEVLNHRRKIKPTHVEKLVYGDGAGDTFKSVVQTDIGRVGQLNCWENMNPFLKAMNVSEGEQVHIAGWPIYPHEETRTPLDPWTNTSNPNSDIVSPAYAIETATYVLAPFQRISKEGVDKCTPPGVEREDHNLYNGNSRIFGPDGQCLAKADEEFEGLMFVEIDLDQSHLPKALGDFGGHYMRPDLIRLLVDTRRKELITEADQDGGIGTYNTQDRVGLNRPLDAPKVDGPSGVSKQVLLSNAKKAAHKG.

A CN hydrolase domain is found at 8–286 (YKAAAVQAEP…EGLMFVEIDL (279 aa)). The active-site Proton acceptor is the glutamate 48. Lysine 130 is a catalytic residue. Cysteine 165 serves as the catalytic Nucleophile. The tract at residues 326–356 (DGGIGTYNTQDRVGLNRPLDAPKVDGPSGVS) is disordered.

The protein belongs to the carbon-nitrogen hydrolase superfamily. Nitrilase family. As to quaternary structure, oligomer of dimers, forming left-handed helical fibers.

The enzyme catalyses formamide = hydrogen cyanide + H2O. In terms of biological role, catalyzes the hydration of cyanide to formamide. Degradation of cyanide may be important for plant pathogenic fungi in infection of cyanogenic plants. Can also transform some nitriles like 2-cyanopyridine and fumaronitrile and has a minor activity with 4-cyanophenyl acetonitrile (4-CPA). The sequence is that of Cyanide hydratase from Botryotinia fuckeliana (strain T4) (Noble rot fungus).